A 185-amino-acid chain; its full sequence is Elongation factor P (185 aa).

Belongs to the elongation factor P family.

It localises to the cytoplasm. The protein operates within protein biosynthesis; polypeptide chain elongation. In terms of biological role, involved in peptide bond synthesis. Stimulates efficient translation and peptide-bond synthesis on native or reconstituted 70S ribosomes in vitro. Probably functions indirectly by altering the affinity of the ribosome for aminoacyl-tRNA, thus increasing their reactivity as acceptors for peptidyl transferase. This is Elongation factor P from Caldicellulosiruptor saccharolyticus (strain ATCC 43494 / DSM 8903 / Tp8T 6331).